Consider the following 428-residue polypeptide: Probable anion transporter 6 (428 aa).

Positions 1-22 (MKFPKRYAIVLLTFMCTNVCYI) are cleaved as a signal peptide. The next 11 helical transmembrane spans lie at 47–67 (MILS…GWAA), 74–94 (LVLL…PLDP), 98–118 (ILLV…FPSI), 137–157 (LTTS…PSLV), 164–184 (SVFS…FKFA), 221–241 (ILFS…HYAL), 269–289 (LPYL…DHLI), 301–321 (KLLN…LPLF), 327–347 (AIFC…GFAV), 356–376 (FAGI…IVGV), and 401–421 (TVFF…LIFS).

This sequence belongs to the major facilitator superfamily. Sodium/anion cotransporter (TC 2.A.1.14) family.

Its subcellular location is the cell membrane. Probable anion transporter. The chain is Probable anion transporter 6 (PHT4;6) from Oryza sativa subsp. japonica (Rice).